The chain runs to 688 residues: Glycine--tRNA ligase beta subunit (688 aa).

This sequence belongs to the class-II aminoacyl-tRNA synthetase family. As to quaternary structure, tetramer of two alpha and two beta subunits.

It localises to the cytoplasm. The catalysed reaction is tRNA(Gly) + glycine + ATP = glycyl-tRNA(Gly) + AMP + diphosphate. This Histophilus somni (strain 129Pt) (Haemophilus somnus) protein is Glycine--tRNA ligase beta subunit.